Consider the following 126-residue polypeptide: Small ribosomal subunit protein uS13 (126 aa).

The disordered stretch occupies residues 92 to 126 (RMGLPVRGQRTRTNARTRRGGRRTVAGKKKAPAKK). The span at 100–126 (QRTRTNARTRRGGRRTVAGKKKAPAKK) shows a compositional bias: basic residues.

The protein belongs to the universal ribosomal protein uS13 family. As to quaternary structure, part of the 30S ribosomal subunit. Forms a loose heterodimer with protein S19. Forms two bridges to the 50S subunit in the 70S ribosome.

Functionally, located at the top of the head of the 30S subunit, it contacts several helices of the 16S rRNA. In the 70S ribosome it contacts the 23S rRNA (bridge B1a) and protein L5 of the 50S subunit (bridge B1b), connecting the 2 subunits; these bridges are implicated in subunit movement. Contacts the tRNAs in the A and P-sites. The chain is Small ribosomal subunit protein uS13 from Cyanothece sp. (strain PCC 7425 / ATCC 29141).